Consider the following 127-residue polypeptide: Large ribosomal subunit protein bL12 (127 aa).

It belongs to the bacterial ribosomal protein bL12 family. In terms of assembly, homodimer. Part of the ribosomal stalk of the 50S ribosomal subunit. Forms a multimeric L10(L12)X complex, where L10 forms an elongated spine to which 2 to 4 L12 dimers bind in a sequential fashion. Binds GTP-bound translation factors.

Functionally, forms part of the ribosomal stalk which helps the ribosome interact with GTP-bound translation factors. Is thus essential for accurate translation. This is Large ribosomal subunit protein bL12 from Streptococcus thermophilus (strain CNRZ 1066).